Reading from the N-terminus, the 593-residue chain is Mitoguardin 2 (593 aa).

2 helical membrane-spanning segments follow: residues 11–31 (MIQA…TTFG) and 42–62 (PGLR…ALAA). 3 disordered regions span residues 98–134 (PSVK…HSGS), 150–171 (TAAC…TTDG), and 197–229 (VGQR…PESQ). Composition is skewed to low complexity over residues 106–116 (SRRVQSPSSKS) and 124–134 (SSIEPSKHSGS). Phosphoserine is present on S132. Polar residues predominate over residues 205 to 218 (STPTPGDSLQNPDT). Position 206 is a phosphothreonine (T206). Phosphoserine is present on residues S220, S224, and S228. T273 is subject to Phosphothreonine. A phosphoserine mark is found at S276 and S295. The short motif at 292 to 298 (SFFSATE) is the FFAT element.

It belongs to the mitoguardin family. In terms of assembly, homodimer and heterodimer; forms heterodimers with MIGA1. Interacts with PLD6/MitoPLD. Interacts (via phosphorylated FFAT motif) with MOSPD2. Phosphorylation at Ser-295 of the FFAT motif activates interaction with MOSPD2.

Its subcellular location is the mitochondrion outer membrane. Regulator of mitochondrial fusion. Acts by forming homo- and heterodimers at the mitochondrial outer membrane and facilitating the formation of PLD6/MitoPLD dimers. May act by regulating phospholipid metabolism via PLD6/MitoPLD. The chain is Mitoguardin 2 from Mus musculus (Mouse).